A 311-amino-acid polypeptide reads, in one-letter code: Methionyl-tRNA formyltransferase (311 aa).

110 to 113 contacts (6S)-5,6,7,8-tetrahydrofolate; sequence SLLP.

Belongs to the Fmt family.

It carries out the reaction L-methionyl-tRNA(fMet) + (6R)-10-formyltetrahydrofolate = N-formyl-L-methionyl-tRNA(fMet) + (6S)-5,6,7,8-tetrahydrofolate + H(+). Functionally, attaches a formyl group to the free amino group of methionyl-tRNA(fMet). The formyl group appears to play a dual role in the initiator identity of N-formylmethionyl-tRNA by promoting its recognition by IF2 and preventing the misappropriation of this tRNA by the elongation apparatus. In Streptococcus pyogenes serotype M28 (strain MGAS6180), this protein is Methionyl-tRNA formyltransferase.